We begin with the raw amino-acid sequence, 167 residues long: Translationally-controlled tumor protein homolog (167 aa).

The TCTP domain maps to 1-167 (MIIYTDIISG…WKHGVKAEKI (167 aa)).

It belongs to the TCTP family.

Its subcellular location is the cytoplasm. The protein resides in the cytoskeleton. Functionally, involved in protein synthesis. Involved in microtubule stabilization. This chain is Translationally-controlled tumor protein homolog, found in Kluyveromyces lactis (strain ATCC 8585 / CBS 2359 / DSM 70799 / NBRC 1267 / NRRL Y-1140 / WM37) (Yeast).